Reading from the N-terminus, the 267-residue chain is tRNA pseudouridine synthase A (267 aa).

D51 acts as the Nucleophile in catalysis. Y109 contributes to the substrate binding site.

This sequence belongs to the tRNA pseudouridine synthase TruA family. As to quaternary structure, homodimer.

It carries out the reaction uridine(38/39/40) in tRNA = pseudouridine(38/39/40) in tRNA. In terms of biological role, formation of pseudouridine at positions 38, 39 and 40 in the anticodon stem and loop of transfer RNAs. This is tRNA pseudouridine synthase A from Staphylococcus epidermidis (strain ATCC 35984 / DSM 28319 / BCRC 17069 / CCUG 31568 / BM 3577 / RP62A).